Here is a 453-residue protein sequence, read N- to C-terminus: Ribulose bisphosphate carboxylase large chain (453 aa).

Positions 1–2 are excised as a propeptide; that stretch reads MS. Pro-3 bears the N-acetylproline mark. Lys-14 carries the N6,N6,N6-trimethyllysine modification. Asn-123 and Thr-173 together coordinate substrate. Lys-175 (proton acceptor) is an active-site residue. Substrate is bound at residue Lys-177. The Mg(2+) site is built by Lys-201, Asp-203, and Glu-204. Residue Lys-201 is modified to N6-carboxylysine. Catalysis depends on His-294, which acts as the Proton acceptor. Positions 295, 327, and 379 each coordinate substrate.

The protein belongs to the RuBisCO large chain family. Type I subfamily. In terms of assembly, heterohexadecamer of 8 large chains and 8 small chains; disulfide-linked. The disulfide link is formed within the large subunit homodimers. Requires Mg(2+) as cofactor. In terms of processing, the disulfide bond which can form in the large chain dimeric partners within the hexadecamer appears to be associated with oxidative stress and protein turnover.

Its subcellular location is the plastid. It is found in the chloroplast. It catalyses the reaction 2 (2R)-3-phosphoglycerate + 2 H(+) = D-ribulose 1,5-bisphosphate + CO2 + H2O. It carries out the reaction D-ribulose 1,5-bisphosphate + O2 = 2-phosphoglycolate + (2R)-3-phosphoglycerate + 2 H(+). In terms of biological role, ruBisCO catalyzes two reactions: the carboxylation of D-ribulose 1,5-bisphosphate, the primary event in carbon dioxide fixation, as well as the oxidative fragmentation of the pentose substrate in the photorespiration process. Both reactions occur simultaneously and in competition at the same active site. This is Ribulose bisphosphate carboxylase large chain from Galium aparine (Catchweed bedstraw).